Reading from the N-terminus, the 26-residue chain is Dermaseptin-J4 (26 aa).

Val26 is modified (valine amide).

In terms of tissue distribution, expressed by the skin glands.

The protein resides in the secreted. Has antimicrobial activity. This Phasmahyla jandaia (Jandaia leaf frog) protein is Dermaseptin-J4.